The following is a 171-amino-acid chain: Adenine phosphoribosyltransferase (171 aa).

The protein belongs to the purine/pyrimidine phosphoribosyltransferase family. As to quaternary structure, homodimer.

The protein resides in the cytoplasm. It carries out the reaction AMP + diphosphate = 5-phospho-alpha-D-ribose 1-diphosphate + adenine. It participates in purine metabolism; AMP biosynthesis via salvage pathway; AMP from adenine: step 1/1. Its function is as follows. Catalyzes a salvage reaction resulting in the formation of AMP, that is energically less costly than de novo synthesis. The sequence is that of Adenine phosphoribosyltransferase from Geobacter metallireducens (strain ATCC 53774 / DSM 7210 / GS-15).